Consider the following 175-residue polypeptide: Protein FanH (175 aa).

Residues 1–20 form the signal peptide; that stretch reads MIKKVPVLLFFMASISITHA. Cysteine 39 and cysteine 77 form a disulfide bridge.

The protein resides in the fimbrium. In terms of biological role, involved in the biosynthesis of K99 fimbriae. This is Protein FanH (fanH) from Escherichia coli.